The following is a 317-amino-acid chain: Melanocyte-stimulating hormone receptor (317 aa).

Over 1 to 37 (MPMQEPQRRLLDPFNSTRTGTPHLKLSANQTGPWCLH) the chain is Extracellular. 2 N-linked (GlcNAc...) asparagine glycosylation sites follow: asparagine 15 and asparagine 29. The chain crosses the membrane as a helical span at residues 38–63 (VSIPDGLFLSLGLVSLVENVLVVISI). Over 64–72 (AKNRNLHSP) the chain is Cytoplasmic. Residues 73 to 93 (MYYFICCLALSDLLVSVSIVL) traverse the membrane as a helical segment. Topologically, residues 94-118 (ETTLILVLEAGALATRVTVVQQLDN) are extracellular. The helical transmembrane segment at 119 to 140 (VIDVLICGSMVSSLCFLGAIAV) threads the bilayer. Topologically, residues 141–163 (DRYISIFYALRYHSIVTLPRARW) are cytoplasmic. The helical transmembrane segment at 164–183 (AIVAIWVASISSSTLFVAYY) threads the bilayer. Residues 184 to 191 (NHTAVLLC) lie on the Extracellular side of the membrane. A helical transmembrane segment spans residues 192 to 211 (LVTFFLATLALMAVLYVHML). Residues 212-240 (ARAHQHAQAIAQLHKRQHLVHQGFRLKGA) are Cytoplasmic-facing. The chain crosses the membrane as a helical span at residues 241 to 266 (ATLTILLGIFFLCWGPFFLYLTLIVL). Residues 267-279 (CPKHPTCSCFFKN) lie on the Extracellular side of the membrane. Residues 280–300 (LNLFLALIIFNSIVDPLIYAF) form a helical membrane-spanning segment. The Cytoplasmic segment spans residues 301-317 (RSQELRMTLKEVLLCSW). Cysteine 315 is lipidated: S-palmitoyl cysteine.

This sequence belongs to the G-protein coupled receptor 1 family. In terms of assembly, interacts with MGRN1, but does not undergo MGRN1-mediated ubiquitination; this interaction competes with GNAS-binding and thus inhibits agonist-induced cAMP production. Interacts with OPN3; the interaction results in a decrease in MC1R-mediated cAMP signaling and ultimately a decrease in melanin production in melanocytes.

Its subcellular location is the cell membrane. Its function is as follows. Receptor for MSH (alpha, beta and gamma) and ACTH. The activity of this receptor is mediated by G proteins which activate adenylate cyclase. Mediates melanogenesis, the production of eumelanin (black/brown) and phaeomelanin (red/yellow), via regulation of cAMP signaling in melanocytes. The chain is Melanocyte-stimulating hormone receptor (MC1R) from Chaetodipus baileyi (Bailey's pocket mouse).